The sequence spans 159 residues: Keratin-associated protein 11-1 (159 aa).

A run of 4 repeats spans residues 107–116 (CQPLSGVSTV), 117–126 (CKPVRSISTV), 127–136 (CQPVGGVSTI), and 137–146 (CQPTCGVSRT). The tract at residues 107–146 (CQPLSGVSTVCKPVRSISTVCQPVGGVSTICQPTCGVSRT) is 4 X 10 AA approximate repeats.

The protein belongs to the PMG family. Wool.

In the wool cortex, wool keratin intermediate filaments are embedded in an interfilamentous matrix, consisting of wool keratin-associated proteins (KRTAP), which are essential for the formation of a rigid and resistant wool shaft through their extensive disulfide bond cross-linking with abundant cysteine residues of wool keratins. The matrix proteins include the high-sulfur and high-glycine-tyrosine keratins. This is Keratin-associated protein 11-1 (KRTAP11-1) from Capra hircus (Goat).